Consider the following 117-residue polypeptide: Large ribosomal subunit protein bL20 (117 aa).

It belongs to the bacterial ribosomal protein bL20 family.

Its function is as follows. Binds directly to 23S ribosomal RNA and is necessary for the in vitro assembly process of the 50S ribosomal subunit. It is not involved in the protein synthesizing functions of that subunit. The sequence is that of Large ribosomal subunit protein bL20 from Pelotomaculum thermopropionicum (strain DSM 13744 / JCM 10971 / SI).